The sequence spans 106 residues: UPF0145 protein SCO3412 (106 aa).

It belongs to the UPF0145 family.

The sequence is that of UPF0145 protein SCO3412 from Streptomyces coelicolor (strain ATCC BAA-471 / A3(2) / M145).